Consider the following 865-residue polypeptide: Lactose regulatory protein LAC9 (865 aa).

The segment covering 1–15 (MGSRASNSPSFSSKA) has biased composition (polar residues). Residues 1–87 (MGSRASNSPS…NNNNNNNKKS (87 aa)) form a disordered region. Over residues 22–34 (EYKKNAVKKETIR) the composition is skewed to basic and acidic residues. The span at 67–85 (SNGNKNDSNANNNNNNNNK) shows a compositional bias: low complexity. Positions 95, 98, 105, 112, 115, and 122 each coordinate Zn(2+). A DNA-binding region (zn(2)-C6 fungal-type) is located at residues 95-122 (CDACRKKKWKCSKTVPTCTNCLKYNLDC). Positions 818-840 (LQSSTTQMRPPTTSGWPDTNNFL) are disordered.

It is found in the nucleus. Positive regulatory protein, that controls induction of the lactose-galactose regulation of Kluyveromyces lactis. This is Lactose regulatory protein LAC9 (LAC9) from Kluyveromyces lactis (strain ATCC 8585 / CBS 2359 / DSM 70799 / NBRC 1267 / NRRL Y-1140 / WM37) (Yeast).